Reading from the N-terminus, the 403-residue chain is Lipase lipl-5 (403 aa).

The signal sequence occupies residues 1 to 18 (MWRFAVFLAAFFVQDVVG). Asn64 is a glycosylation site (N-linked (GlcNAc...) asparagine). The active-site Nucleophile is the Ser167. The N-linked (GlcNAc...) asparagine glycan is linked to Asn271. Residues Asp343 and His375 each act as charge relay system in the active site.

The protein belongs to the AB hydrolase superfamily. Lipase family.

Its subcellular location is the lysosome lumen. It is found in the secreted. Functionally, lipase involved in lipid homeostasis. Regulates mitochondrial lipid composition, in particular cardiolipins and coenzyme Q-9 levels, in response to nutrient availability. Does not affect global triglyceride levels in response to nutrient availability. However, in coelomocytes, specifically promotes triglyceride catabolism and lifespan extension in response to nutrient deprivation. The protein is Lipase lipl-5 of Caenorhabditis elegans.